The sequence spans 391 residues: Pyruvate dehydrogenase E1 component subunit alpha, testis-specific form, mitochondrial (391 aa).

A mitochondrion-targeting transit peptide spans methionine 1–lysine 30. Residues histidine 93, tyrosine 119, arginine 120, alanine 158, glycine 166, valine 168, aspartate 197, glycine 198, alanine 199, asparagine 226, and tyrosine 228 each contribute to the pyruvate site. Tyrosine 119 and arginine 120 together coordinate thiamine diphosphate. Positions 166, 168, 197, 198, 199, and 226 each coordinate thiamine diphosphate. Mg(2+) is bound at residue aspartate 197. 2 residues coordinate Mg(2+): asparagine 226 and tyrosine 228. Histidine 293 contributes to the thiamine diphosphate binding site. Serine 294 and serine 296 each carry phosphoserine. Phosphoserine; by PDK3 is present on serine 301.

As to quaternary structure, heterotetramer of two PDHA2 and two PDHB subunits. The heterotetramer interacts with DLAT, and is part of the multimeric pyruvate dehydrogenase complex that contains multiple copies of pyruvate dehydrogenase (E1), dihydrolipoamide acetyltransferase (DLAT, E2) and lipoamide dehydrogenase (DLD, E3). These subunits are bound to an inner core composed of about 48 DLAT and 12 PDHX molecules. Requires thiamine diphosphate as cofactor. It depends on Mg(2+) as a cofactor. In terms of tissue distribution, testis.

It is found in the mitochondrion matrix. The catalysed reaction is N(6)-[(R)-lipoyl]-L-lysyl-[protein] + pyruvate + H(+) = N(6)-[(R)-S(8)-acetyldihydrolipoyl]-L-lysyl-[protein] + CO2. Pyruvate dehydrogenase activity is inhibited by phosphorylation of PDHA2; it is reactivated by dephosphorylation. The pyruvate dehydrogenase complex catalyzes the overall conversion of pyruvate to acetyl-CoA and CO(2), and thereby links the glycolytic pathway to the tricarboxylic cycle. This chain is Pyruvate dehydrogenase E1 component subunit alpha, testis-specific form, mitochondrial (Pdha2), found in Rattus norvegicus (Rat).